Reading from the N-terminus, the 428-residue chain is Ribulose bisphosphate carboxylase (428 aa).

Residue lysine 151 is the Proton acceptor of the active site. Lysine 153 contacts substrate. Mg(2+) contacts are provided by lysine 177, aspartate 179, and glutamate 180. Position 177 is an N6-carboxylysine (lysine 177). The active-site Proton acceptor is histidine 270. Residues arginine 271, histidine 303, 354–356 (SGG), and 376–379 (QFGG) contribute to the substrate site.

The protein belongs to the RuBisCO large chain family. Type III subfamily. As to quaternary structure, homodimer. In contrast to form I RuBisCO, the form III RuBisCO is composed solely of large subunits. Mg(2+) is required as a cofactor.

It carries out the reaction 2 (2R)-3-phosphoglycerate + 2 H(+) = D-ribulose 1,5-bisphosphate + CO2 + H2O. The enzyme catalyses D-ribulose 1,5-bisphosphate + O2 = 2-phosphoglycolate + (2R)-3-phosphoglycerate + 2 H(+). Its activity is regulated as follows. Reversibly inhibited by O(2). Functionally, catalyzes the addition of molecular CO(2) and H(2)O to ribulose 1,5-bisphosphate (RuBP), generating two molecules of 3-phosphoglycerate (3-PGA). Functions in an archaeal AMP degradation pathway, together with AMP phosphorylase and R15P isomerase. This Methanosarcina acetivorans (strain ATCC 35395 / DSM 2834 / JCM 12185 / C2A) protein is Ribulose bisphosphate carboxylase.